We begin with the raw amino-acid sequence, 161 residues long: ATP synthase subunit b (161 aa).

The chain crosses the membrane as a helical span at residues 10–29; that stretch reads AVVQLLNFLFLLWILNKLLY.

This sequence belongs to the ATPase B chain family. As to quaternary structure, F-type ATPases have 2 components, F(1) - the catalytic core - and F(0) - the membrane proton channel. F(1) has five subunits: alpha(3), beta(3), gamma(1), delta(1), epsilon(1). F(0) has three main subunits: a(1), b(2) and c(10-14). The alpha and beta chains form an alternating ring which encloses part of the gamma chain. F(1) is attached to F(0) by a central stalk formed by the gamma and epsilon chains, while a peripheral stalk is formed by the delta and b chains.

Its subcellular location is the cell inner membrane. F(1)F(0) ATP synthase produces ATP from ADP in the presence of a proton or sodium gradient. F-type ATPases consist of two structural domains, F(1) containing the extramembraneous catalytic core and F(0) containing the membrane proton channel, linked together by a central stalk and a peripheral stalk. During catalysis, ATP synthesis in the catalytic domain of F(1) is coupled via a rotary mechanism of the central stalk subunits to proton translocation. Its function is as follows. Component of the F(0) channel, it forms part of the peripheral stalk, linking F(1) to F(0). The polypeptide is ATP synthase subunit b (Fervidobacterium nodosum (strain ATCC 35602 / DSM 5306 / Rt17-B1)).